The following is a 487-amino-acid chain: MTTLMVQGTTSDAGKSTLVTALCRWLLRQGVAVVPFKPQNMALNSAVTADGGEIGRAQAVQAQACRLAPHTDMNPVLLKPNSDTGAQVIVHGRAVTSMNAVAYHDYKVIAMQAVLASHERLRQAYPVVMVEGAGSPAEINLRAGDIANMGFAEAVDCPVILIADINRGGVFAHLVGTLELLSPSEQARVKGFVINRFRGDIALLQPGLDWLEQRTGKPVLGVLPYVTDLHLEAEDAIDVRQAVKGERVLKVIVPVLPRISNHTDFDPLRLHPQVDLQFIGPGQPIPPADLIILPGSKSVRADLSQLRERGWDSAIARHLRYGGKLIGICGGLQMLGHEVHDPLGLEGAAGSSAGLGLLDYSTVLEAEKQLRNVAGTLGLEQAPVSGYEIHAGVTHGPGLEHPAVQLDDGRNDGAISADGQILATYLHGLFEGSQSCAALLRWAGLADAQAIDYEALRERDIERLADLVEQHLDTERLRQLCGVTADA.

In terms of domain architecture, GATase cobBQ-type spans 248 to 435 (VLKVIVPVLP…LHGLFEGSQS (188 aa)). Catalysis depends on C329, which acts as the Nucleophile. The active site involves H427.

It belongs to the CobB/CobQ family. CobQ subfamily.

It functions in the pathway cofactor biosynthesis; adenosylcobalamin biosynthesis. Catalyzes amidations at positions B, D, E, and G on adenosylcobyrinic A,C-diamide. NH(2) groups are provided by glutamine, and one molecule of ATP is hydrogenolyzed for each amidation. The polypeptide is Cobyric acid synthase (Pseudomonas entomophila (strain L48)).